Reading from the N-terminus, the 36-residue chain is uncharacterized protein (36 aa).

Residues 1 to 14 (MNQLGSGPTKQGVA) are compositionally biased toward polar residues. The tract at residues 1-36 (MNQLGSGPTKQGVATNTGSTGTTKNNSNLSGKGWVL) is disordered. Residues 15–36 (TNTGSTGTTKNNSNLSGKGWVL) show a composition bias toward low complexity.

This is an uncharacterized protein from Dictyostelium discoideum (Social amoeba).